Here is a 442-residue protein sequence, read N- to C-terminus: Tryptophan synthase beta chain 2 (442 aa).

At Lys-122 the chain carries N6-(pyridoxal phosphate)lysine.

The protein belongs to the TrpB family. Tetramer of two alpha and two beta chains. Pyridoxal 5'-phosphate serves as cofactor.

It catalyses the reaction (1S,2R)-1-C-(indol-3-yl)glycerol 3-phosphate + L-serine = D-glyceraldehyde 3-phosphate + L-tryptophan + H2O. Its pathway is amino-acid biosynthesis; L-tryptophan biosynthesis; L-tryptophan from chorismate: step 5/5. In terms of biological role, the beta subunit is responsible for the synthesis of L-tryptophan from indole and L-serine. The polypeptide is Tryptophan synthase beta chain 2 (trpB2) (Methanosarcina acetivorans (strain ATCC 35395 / DSM 2834 / JCM 12185 / C2A)).